A 432-amino-acid polypeptide reads, in one-letter code: Trigger factor (432 aa).

One can recognise a PPIase FKBP-type domain in the interval 161–246; the sequence is EDRVTIDFTG…LKKVEERELP (86 aa).

This sequence belongs to the FKBP-type PPIase family. Tig subfamily.

The protein resides in the cytoplasm. It carries out the reaction [protein]-peptidylproline (omega=180) = [protein]-peptidylproline (omega=0). Involved in protein export. Acts as a chaperone by maintaining the newly synthesized protein in an open conformation. Functions as a peptidyl-prolyl cis-trans isomerase. In Cronobacter sakazakii (strain ATCC BAA-894) (Enterobacter sakazakii), this protein is Trigger factor.